A 251-amino-acid chain; its full sequence is Endoglucanase CX (251 aa).

This sequence belongs to the glycosyl hydrolase 9 (cellulase E) family.

It catalyses the reaction Endohydrolysis of (1-&gt;4)-beta-D-glucosidic linkages in cellulose, lichenin and cereal beta-D-glucans.. Degrades carboxymethylcellulose (CMC). This chain is Endoglucanase CX, found in Prunus persica (Peach).